We begin with the raw amino-acid sequence, 346 residues long: fMet-Leu-Phe receptor (346 aa).

2 N-linked (GlcNAc...) asparagine glycosylation sites follow: N1 and N7. The Extracellular segment spans residues 1 to 24 (NSSLPTNISGGTPAVSAGYLFLDI). A helical transmembrane segment spans residues 25–47 (ITYLVFAVTFVLGVLGNGLVIWV). The Cytoplasmic portion of the chain corresponds to 48–58 (AGFRMTHTVTT). The chain crosses the membrane as a helical span at residues 59–80 (ISYLNLAVADFCFTSTLPFFMV). Residues 81–97 (RKAMGGHWPFGWFLCKF) are Extracellular-facing. C95 and C173 form a disulfide bridge. A helical transmembrane segment spans residues 98–118 (IFTIVDINLFGSVFLIALIAL). Over 119 to 137 (DRCVCVLHPVWTQNHRTVS) the chain is Cytoplasmic. Residues 138 to 159 (LAKKVIIGPWVMALLLTLPVII) traverse the membrane as a helical segment. The Extracellular portion of the chain corresponds to 160-202 (RVTTVPGKTGTVACTFNFSPWTNDPKERINVAIAMLTVRGIIR). A helical membrane pass occupies residues 203-223 (FIIGFSAPMSIVAVSYGLIAT). Residues 224 to 239 (KIHKQGLIKFSRPLRV) are Cytoplasmic-facing. A helical membrane pass occupies residues 240-263 (LSFVAAAFFLCWSPYQVVALIATV). Residues 264–282 (RIRELLQGMYKEIGIAVDV) are Extracellular-facing. Residues 283-302 (TSALAFFNSCLNPMLYVFMG) traverse the membrane as a helical segment. Residues 303–346 (QDFRERLIHALPASLERALTEDSTQTSDTATNSTLPSAEVALQA) are Cytoplasmic-facing. The disordered stretch occupies residues 322-346 (TEDSTQTSDTATNSTLPSAEVALQA). Over residues 323–338 (EDSTQTSDTATNSTLP) the composition is skewed to polar residues.

This sequence belongs to the G-protein coupled receptor 1 family. Phosphorylated; which is necessary for desensitization.

The protein localises to the cell membrane. In terms of biological role, high affinity receptor for N-formyl-methionyl peptides (fMLP), which are powerful neutrophil chemotactic factors. Binding of fMLP to the receptor stimulates intracellular calcium mobilization and superoxide anion release. This response is mediated via a G-protein that activates a phosphatidylinositol-calcium second messenger system. Receptor for TAFA4, mediates its effects on chemoattracting macrophages, promoting phagocytosis and increasing ROS release. Receptor for cathepsin CTSG, leading to increased phagocyte chemotaxis. The polypeptide is fMet-Leu-Phe receptor (FPR1) (Pan troglodytes (Chimpanzee)).